We begin with the raw amino-acid sequence, 859 residues long: DNA mismatch repair protein MutS (859 aa).

ATP is bound at residue 615 to 622 (GPNMGGKS).

Belongs to the DNA mismatch repair MutS family.

Its function is as follows. This protein is involved in the repair of mismatches in DNA. It is possible that it carries out the mismatch recognition step. This protein has a weak ATPase activity. This is DNA mismatch repair protein MutS from Chromohalobacter salexigens (strain ATCC BAA-138 / DSM 3043 / CIP 106854 / NCIMB 13768 / 1H11).